A 900-amino-acid chain; its full sequence is DNA mismatch repair protein MutS (900 aa).

Residue 637–644 coordinates ATP; it reads GPNMAGKS.

It belongs to the DNA mismatch repair MutS family.

This protein is involved in the repair of mismatches in DNA. It is possible that it carries out the mismatch recognition step. This protein has a weak ATPase activity. This is DNA mismatch repair protein MutS from Methanosarcina mazei (strain ATCC BAA-159 / DSM 3647 / Goe1 / Go1 / JCM 11833 / OCM 88) (Methanosarcina frisia).